The primary structure comprises 357 residues: DNA integrity scanning protein DisA (357 aa).

In terms of domain architecture, DAC spans 3–141 (RPTLRETVAR…GGERHVVADS (139 aa)). Residues Gly-70, Leu-88, and 101 to 105 (TRHRS) contribute to the ATP site.

It belongs to the DisA family. Homooctamer. Requires Mg(2+) as cofactor.

It carries out the reaction 2 ATP = 3',3'-c-di-AMP + 2 diphosphate. Functionally, participates in a DNA-damage check-point. DisA forms globular foci that rapidly scan along the chromosomes searching for lesions. In terms of biological role, also has diadenylate cyclase activity, catalyzing the condensation of 2 ATP molecules into cyclic di-AMP (c-di-AMP). c-di-AMP likely acts as a signaling molecule that may couple DNA integrity with a cellular process. This Mycobacterium avium (strain 104) protein is DNA integrity scanning protein DisA.